Here is a 39-residue protein sequence, read N- to C-terminus: Natriuretic peptide PaNP-d (39 aa).

Residues 1-8 (SGSKTAEI) constitute a propeptide that is removed on maturation. The disordered stretch occupies residues 1-39 (SGSKTAEIDDGCFGLPLDPIGSTSGMGCRSVPKPIPGGS). A disulfide bridge links cysteine 12 with cysteine 28.

It belongs to the natriuretic peptide family. Expressed by the venom gland.

Its subcellular location is the secreted. In terms of biological role, snake venom natriuretic peptide that targets both NPR1 and NPR2. Exhibits hypotensive and vasodepressor activities. This is Natriuretic peptide PaNP-d from Pseudechis australis (Mulga snake).